Here is a 438-residue protein sequence, read N- to C-terminus: Glutamate-1-semialdehyde 2,1-aminomutase (438 aa).

Lys-277 is subject to N6-(pyridoxal phosphate)lysine.

It belongs to the class-III pyridoxal-phosphate-dependent aminotransferase family. HemL subfamily. Homodimer. It depends on pyridoxal 5'-phosphate as a cofactor.

The protein localises to the cytoplasm. The enzyme catalyses (S)-4-amino-5-oxopentanoate = 5-aminolevulinate. The protein operates within porphyrin-containing compound metabolism; protoporphyrin-IX biosynthesis; 5-aminolevulinate from L-glutamyl-tRNA(Glu): step 2/2. Its pathway is porphyrin-containing compound metabolism; chlorophyll biosynthesis. This is Glutamate-1-semialdehyde 2,1-aminomutase from Synechococcus sp. (strain CC9311).